A 112-amino-acid polypeptide reads, in one-letter code: Putative transposase YkgN (112 aa).

This sequence belongs to the transposase 8 family.

The chain is Putative transposase YkgN (ykgN) from Escherichia coli (strain K12).